Here is a 323-residue protein sequence, read N- to C-terminus: Large ribosomal subunit protein uL10 (323 aa).

A disordered region spans residues 296–323 (AAPAAPSAAAKEEPEESDEDDFGMGGLF). Residues 308-317 (EPEESDEDDF) are compositionally biased toward acidic residues.

The protein belongs to the universal ribosomal protein uL10 family. P0 forms a pentameric complex by interaction with dimers of P1 and P2. In terms of processing, phosphorylated.

Its function is as follows. Ribosomal protein P0 is the functional equivalent of E.coli protein L10. In Leishmania infantum, this protein is Large ribosomal subunit protein uL10 (LIPO-A).